The primary structure comprises 254 residues: Low affinity immunoglobulin gamma Fc region receptor III-A (254 aa).

The signal sequence occupies residues Met-1–Ala-20. 2 Ig-like C2-type domains span residues Pro-24–His-105 and Gly-107–Thr-189. 2 disulfide bridges follow: Cys-47–Cys-89 and Cys-128–Cys-172. N-linked (GlcNAc...) asparagine glycosylation occurs at Asn-187. The chain crosses the membrane as a helical span at residues Tyr-207–Val-229. The interval Pro-234–Lys-254 is disordered. Positions Asp-239 to Lys-254 are enriched in basic and acidic residues.

In terms of assembly, forms a heterooligomeric complex with ITAM-containing signaling subunits, either a homodimer of CD247, a homodimer of FCER1G or a heterodimer of CD247 and FCER1G, to form a functional receptor complex. Interacts (via transmembrane domain) with signaling subunits; this interaction is a prerequisite for receptor complex expression on the cell surface and intracellular signal transduction. Binds the Fc region of antigen-complexed IgG with a preference for IgG1 and IgG3 isotypes. Interacts with CD2; this interaction is involved in NK cell activation and cytotoxicity. Interacts with S100A4; this interaction inhibits PKC-dependent phosphorylation of FCGR3A. Post-translationally, glycosylated. Glycosylation plays an inhibitory role in the interaction with IgG1 and IgG2. In terms of processing, undergoes rapid ectodomain shedding upon NK cell stimulation. The soluble form is produced by a proteolytic cleavage mediated by ADAM17. Repeated stimulation causes receptor shedding, a mechanism that allows for increased NK cell motility and detachment from opsonized target cells while avoiding activation-induced NK cell apoptosis. Lymphocytes and monocytes.

It localises to the cell membrane. Its subcellular location is the secreted. Functionally, receptor for the invariable Fc fragment of immunoglobulin gamma (IgG). Optimally activated upon binding of clustered antigen-IgG complexes displayed on cell surfaces, triggers lysis of antibody-coated cells, a process known as antibody-dependent cellular cytotoxicity (ADCC). Does not bind free monomeric IgG, thus avoiding inappropriate effector cell activation in the absence of antigenic trigger. Mediates IgG effector functions on natural killer (NK) cells. Binds antigen-IgG complexes generated upon infection and triggers NK cell-dependent cytokine production and degranulation to limit viral load and propagation. Involved in the generation of memory-like adaptive NK cells capable to produce high amounts of IFNG and to efficiently eliminate virus-infected cells via ADCC. Regulates NK cell survival and proliferation, in particular by preventing NK cell progenitor apoptosis. Fc-binding subunit that associates with CD247 and/or FCER1G adapters to form functional signaling complexes. Following the engagement of antigen-IgG complexes, triggers phosphorylation of immunoreceptor tyrosine-based activation motif (ITAM)-containing adapters with subsequent activation of phosphatidylinositol 3-kinase signaling and sustained elevation of intracellular calcium that ultimately drive NK cell activation. The ITAM-dependent signaling coupled to receptor phosphorylation by PKC mediates robust intracellular calcium flux that leads to production of pro-inflammatory cytokines, whereas in the absence of receptor phosphorylation it mainly activates phosphatidylinositol 3-kinase signaling leading to cell degranulation. Costimulates NK cells and trigger lysis of target cells independently of IgG binding. Mediates the antitumor activities of therapeutic antibodies. Upon ligation on monocytes triggers TNFA-dependent ADCC of IgG-coated tumor cells. Mediates enhanced ADCC in response to afucosylated IgGs. In Papio anubis (Olive baboon), this protein is Low affinity immunoglobulin gamma Fc region receptor III-A (FCGR3A).